We begin with the raw amino-acid sequence, 202 residues long: Putative 3-methyladenine DNA glycosylase (202 aa).

It belongs to the DNA glycosylase MPG family.

This Staphylococcus aureus (strain MRSA252) protein is Putative 3-methyladenine DNA glycosylase.